The chain runs to 707 residues: Polyribonucleotide nucleotidyltransferase (707 aa).

D485 and D491 together coordinate Mg(2+). The KH domain occupies P552–V615. Residues G621 to K689 enclose the S1 motif domain.

It belongs to the polyribonucleotide nucleotidyltransferase family. It depends on Mg(2+) as a cofactor.

Its subcellular location is the cytoplasm. The enzyme catalyses RNA(n+1) + phosphate = RNA(n) + a ribonucleoside 5'-diphosphate. In terms of biological role, involved in mRNA degradation. Catalyzes the phosphorolysis of single-stranded polyribonucleotides processively in the 3'- to 5'-direction. The chain is Polyribonucleotide nucleotidyltransferase from Rhodospirillum centenum (strain ATCC 51521 / SW).